A 1261-amino-acid chain; its full sequence is Rho GTPase-activating protein 29 (1261 aa).

A phosphoserine mark is found at S171, S176, S179, and S190. The 271-residue stretch at 192–462 (LELDNVLLKN…SAKLYDPGQE (271 aa)) folds into the F-BAR domain. Residues 296 to 418 (RKNEMEKQRK…EILAQLRTLV (123 aa)) are a coiled coil. The segment at 481-501 (NVNKHLNSSQPSGFGPANSLE) is disordered. Phosphoserine occurs at positions 499, 519, and 552. A compositionally biased stretch (low complexity) spans 541–559 (SESTGGSSESRSLDSESIS). A disordered region spans residues 541 to 600 (SESTGGSSESRSLDSESISPGDFHRKLPRTPSSGTMSSADDLDEREPPSPSETGPNSLGT). A Phorbol-ester/DAG-type zinc finger spans residues 612 to 657 (THKFRKLRSPTKCRDCEGIVVFQGVECEECLLVCHRKCLENLVIIC). The Rho-GAP domain occupies 671 to 886 (AEFTQVAKKE…FLITYSQKIF (216 aa)). Phosphoserine occurs at positions 913 and 949. Residues 981-1011 (SASQKIEDGKTPKPLSLKSDRSTNNVERHTP) form a disordered region. Positions 998 to 1010 (KSDRSTNNVERHT) are enriched in basic and acidic residues. A phosphoserine mark is found at S1019, S1144, and S1146. 2 disordered regions span residues 1117 to 1153 (HSIN…APVR) and 1178 to 1238 (GNEE…VNPM). A compositionally biased stretch (basic and acidic residues) spans 1133-1144 (RSVREASERRSS). The interaction with PTPN13/PTPL1 stretch occupies residues 1258 to 1261 (PQFV).

As to quaternary structure, interacts with PTPN13/PTPL1. Interacts with RAP2A via its coiled coil domain. Interacts with RASIP1. Widely expressed. Highly expressed in skeletal muscle and heart. Expressed at intermediate level in placenta, liver and pancreas. Weakly expressed in brain, lung and kidney.

In terms of biological role, GTPase activator for the Rho-type GTPases by converting them to an inactive GDP-bound state. Has strong activity toward RHOA, and weaker activity toward RAC1 and CDC42. May act as a specific effector of RAP2A to regulate Rho. In concert with RASIP1, suppresses RhoA signaling and dampens ROCK and MYH9 activities in endothelial cells and plays an essential role in blood vessel tubulogenesis. The sequence is that of Rho GTPase-activating protein 29 (ARHGAP29) from Homo sapiens (Human).